Here is a 651-residue protein sequence, read N- to C-terminus: Intraflagellar transport protein 70A (651 aa).

TPR repeat units follow at residues D8 to S41, R42 to V75, P140 to K173, D175 to E207, L372 to T405, I410 to H443, and I445 to N478. Residues Y494–N521 adopt a coiled-coil conformation. One copy of the TPR 8 repeat lies at C530–K563.

Belongs to the TTC30/dfy-1/fleer family.

The protein localises to the cell projection. Its subcellular location is the cilium. Required for polyglutamylation of axonemal tubulin. Plays a role in anterograde intraflagellar transport (IFT), the process by which cilia precursors are transported from the base of the cilium to the site of their incorporation at the tip. The sequence is that of Intraflagellar transport protein 70A (ift70a) from Xenopus tropicalis (Western clawed frog).